Consider the following 368-residue polypeptide: Isocitrate dehydrogenase [NAD] subunit 2, mitochondrial (368 aa).

The N-terminal 14 residues, 1–14, are a transit peptide targeting the mitochondrion; it reads MFRQSIVKQSCRFL. Residues Arg-118, Arg-128, Arg-149, and Asp-236 each contribute to the substrate site. Mg(2+) contacts are provided by Asp-236, Asp-262, and Asp-266.

This sequence belongs to the isocitrate and isopropylmalate dehydrogenases family. In terms of assembly, octamer of two non-identical subunits IDH1 and IDH2. Mg(2+) is required as a cofactor. Mn(2+) serves as cofactor.

It localises to the mitochondrion. It carries out the reaction D-threo-isocitrate + NAD(+) = 2-oxoglutarate + CO2 + NADH. In terms of biological role, performs an essential role in the oxidative function of the citric acid cycle. The sequence is that of Isocitrate dehydrogenase [NAD] subunit 2, mitochondrial (IDH2) from Kluyveromyces lactis (strain ATCC 8585 / CBS 2359 / DSM 70799 / NBRC 1267 / NRRL Y-1140 / WM37) (Yeast).